We begin with the raw amino-acid sequence, 93 residues long: Small ribosomal subunit protein uS19 (93 aa).

It belongs to the universal ribosomal protein uS19 family.

Protein S19 forms a complex with S13 that binds strongly to the 16S ribosomal RNA. This chain is Small ribosomal subunit protein uS19, found in Mycolicibacterium smegmatis (strain ATCC 700084 / mc(2)155) (Mycobacterium smegmatis).